The sequence spans 108 residues: UPF0060 membrane protein YnfA (108 aa).

The Periplasmic segment spans residues 1-5; it reads MLKTT. Residues 6-26 traverse the membrane as a helical segment; sequence LLFFVTALCEIIGCFLPWLWL. Residues 27-30 are Cytoplasmic-facing; sequence KRGA. A helical transmembrane segment spans residues 31-51; sequence SMWWLLPAAASLALFVWLLTL. Residues 52–60 lie on the Periplasmic side of the membrane; the sequence is HPAASGRVY. A helical transmembrane segment spans residues 61-81; it reads AAYGGVYVCTALLWLRVVDGV. At 82-84 the chain is on the cytoplasmic side; it reads RLT. Residues 85–105 form a helical membrane-spanning segment; it reads VYDWCGALIALCGMLIIVVGW. Topologically, residues 106–108 are periplasmic; that stretch reads GRT.

The protein belongs to the UPF0060 family.

Its subcellular location is the cell inner membrane. The protein is UPF0060 membrane protein YnfA of Salmonella schwarzengrund (strain CVM19633).